The chain runs to 345 residues: MTILNPITFPVILESLLASNDLTEEQSNYLMNSWLDNKIEPVQTGAFLAAFRAKGVSGDELSAMAKILQDASTTPSDLPSFDLVDTCGTGGDGANTFNISTGVAFVSAALGVKIAKHGNRSASGKVGSADVLENLGLPLNVSSGKVVEALKKLGITFLFAPSWHPSLVNLAPLRKSLGVRTIFNLLGPLVNPLRPKSQVLGVAKADLLDPMSVALKGMGLKRAVVVHGAGGLDEASLAGANQFRFLDKDVIRSEIISPGDLGLTQISNESLKGDGLKTNSHILKSLLNGEGNQYHKEVIALNTALVLWVSGTEDDLSSGVKRALDCLDTDKSWLLFEQLRDFLAT.

5-phospho-alpha-D-ribose 1-diphosphate contacts are provided by residues glycine 88, 91 to 92 (GD), threonine 96, 98 to 101 (NIST), 116 to 124 (KHGNRSASG), and serine 128. Glycine 88 serves as a coordination point for anthranilate. Serine 100 is a Mg(2+) binding site. Asparagine 119 is a binding site for anthranilate. Arginine 174 is an anthranilate binding site. Residues aspartate 233 and glutamate 234 each coordinate Mg(2+).

It belongs to the anthranilate phosphoribosyltransferase family. As to quaternary structure, homodimer. It depends on Mg(2+) as a cofactor.

The enzyme catalyses N-(5-phospho-beta-D-ribosyl)anthranilate + diphosphate = 5-phospho-alpha-D-ribose 1-diphosphate + anthranilate. It functions in the pathway amino-acid biosynthesis; L-tryptophan biosynthesis; L-tryptophan from chorismate: step 2/5. Catalyzes the transfer of the phosphoribosyl group of 5-phosphorylribose-1-pyrophosphate (PRPP) to anthranilate to yield N-(5'-phosphoribosyl)-anthranilate (PRA). This Prochlorococcus marinus (strain NATL2A) protein is Anthranilate phosphoribosyltransferase.